A 92-amino-acid polypeptide reads, in one-letter code: MTSSRFIITVIGSDRVGIVARITTVMASYNVNIVDISQTIMQGIFTMIMLAEAPKENFDLAAFQHAMDAEGKSLGVEVKVQHEDVFRFMHRI.

One can recognise an ACT domain in the interval 7-81 (IITVIGSDRV…KSLGVEVKVQ (75 aa)).

It belongs to the UPF0237 family.

This chain is UPF0237 protein MA_3235, found in Methanosarcina acetivorans (strain ATCC 35395 / DSM 2834 / JCM 12185 / C2A).